A 510-amino-acid polypeptide reads, in one-letter code: Cytochrome P450 monooxygenase BOT1 (510 aa).

The chain crosses the membrane as a helical span at residues Pro16 to Val36. Residue Cys454 coordinates heme. Asn476 carries an N-linked (GlcNAc...) asparagine glycan.

Belongs to the cytochrome P450 family. It depends on heme as a cofactor.

It localises to the membrane. It functions in the pathway secondary metabolite biosynthesis. Its function is as follows. Cytochrome P450 monooxygenase; part of the gene cluster that mediates the biosynthesis of botrydial. Botrydial is necessary for colonization of plant tissue by the T4 strain. It is a strain-dependent virulence factor since highly aggressive strains like SAS56 or B05 still retain substantial virulence when botrydial synthesis is impaired, since they produce also botcinic acid. The first step of botrydial biosynthesis is performed by the sesquiterpene synthase BOT2 which catalyzes the cyclization of farnesyl diphosphate (FPP) to presilphiperfolan-8-beta-ol (PSP). The cytochrome P450 monooxygenase BOT4 then catalyzes the hydroxylation at C-4 to give a probotryane intermediate. Acetylation of the hydroxyl at C-4 is carried out by the acetyltransferase BOT5, followed by the combined action of the P450 monooxygenases BOT3 and BOT1, to yield finally the glycol, via the regio- and stereospecific hydroxylations at C-10 and C-15 of the probotryane intermediates, respectively. The cleavage of the C10-C15 bond of probotryane skeleton is an intriguing and chemically important reaction, which could be mediated by some of the monooxygenases or by a combination of them. It is possible that either BOT3 or BOT1 would oxidize either the 10- or the 15-hydroxy group to the hydroperoxide derivative, which would then undergo heterolytic fragmentation to give the dialdehyde botrydial. Finally, the dehydrogenase BOT7 might be involved in the conversion of botrydial to dihydrobotrydial. This Botryotinia fuckeliana (Noble rot fungus) protein is Cytochrome P450 monooxygenase BOT1.